The sequence spans 155 residues: SsrA-binding protein (155 aa).

This sequence belongs to the SmpB family.

It is found in the cytoplasm. Its function is as follows. Required for rescue of stalled ribosomes mediated by trans-translation. Binds to transfer-messenger RNA (tmRNA), required for stable association of tmRNA with ribosomes. tmRNA and SmpB together mimic tRNA shape, replacing the anticodon stem-loop with SmpB. tmRNA is encoded by the ssrA gene; the 2 termini fold to resemble tRNA(Ala) and it encodes a 'tag peptide', a short internal open reading frame. During trans-translation Ala-aminoacylated tmRNA acts like a tRNA, entering the A-site of stalled ribosomes, displacing the stalled mRNA. The ribosome then switches to translate the ORF on the tmRNA; the nascent peptide is terminated with the 'tag peptide' encoded by the tmRNA and targeted for degradation. The ribosome is freed to recommence translation, which seems to be the essential function of trans-translation. The sequence is that of SsrA-binding protein from Oenococcus oeni (strain ATCC BAA-331 / PSU-1).